The chain runs to 420 residues: Glutamate dehydrogenase (420 aa).

K105 is an active-site residue. 220 to 226 (GYGNAGY) is an NAD(+) binding site.

Belongs to the Glu/Leu/Phe/Val dehydrogenases family. As to quaternary structure, homohexamer.

The protein resides in the cytoplasm. It carries out the reaction L-glutamate + NAD(+) + H2O = 2-oxoglutarate + NH4(+) + NADH + H(+). The enzyme catalyses L-glutamate + NADP(+) + H2O = 2-oxoglutarate + NH4(+) + NADPH + H(+). The chain is Glutamate dehydrogenase (gdhA) from Pyrococcus endeavori.